The primary structure comprises 447 residues: UDP-N-acetylmuramoylalanine--D-glutamate ligase (447 aa).

G112 to T118 contributes to the ATP binding site.

Belongs to the MurCDEF family.

The protein resides in the cytoplasm. The enzyme catalyses UDP-N-acetyl-alpha-D-muramoyl-L-alanine + D-glutamate + ATP = UDP-N-acetyl-alpha-D-muramoyl-L-alanyl-D-glutamate + ADP + phosphate + H(+). Its pathway is cell wall biogenesis; peptidoglycan biosynthesis. Functionally, cell wall formation. Catalyzes the addition of glutamate to the nucleotide precursor UDP-N-acetylmuramoyl-L-alanine (UMA). The polypeptide is UDP-N-acetylmuramoylalanine--D-glutamate ligase (Legionella pneumophila (strain Paris)).